A 633-amino-acid chain; its full sequence is uncharacterized protein (633 aa).

This is an uncharacterized protein from Archaeoglobus fulgidus (strain ATCC 49558 / DSM 4304 / JCM 9628 / NBRC 100126 / VC-16).